A 273-amino-acid chain; its full sequence is Ribosomal RNA small subunit methyltransferase A (273 aa).

S-adenosyl-L-methionine is bound by residues N18, L20, G45, E66, D91, and N113.

The protein belongs to the class I-like SAM-binding methyltransferase superfamily. rRNA adenine N(6)-methyltransferase family. RsmA subfamily.

Its subcellular location is the cytoplasm. It catalyses the reaction adenosine(1518)/adenosine(1519) in 16S rRNA + 4 S-adenosyl-L-methionine = N(6)-dimethyladenosine(1518)/N(6)-dimethyladenosine(1519) in 16S rRNA + 4 S-adenosyl-L-homocysteine + 4 H(+). In terms of biological role, specifically dimethylates two adjacent adenosines (A1518 and A1519) in the loop of a conserved hairpin near the 3'-end of 16S rRNA in the 30S particle. May play a critical role in biogenesis of 30S subunits. The polypeptide is Ribosomal RNA small subunit methyltransferase A (Escherichia coli O1:K1 / APEC).